Here is a 508-residue protein sequence, read N- to C-terminus: Photosystem II CP47 reaction center protein (508 aa).

6 helical membrane passes run 21 to 36 (AVHI…WAGS), 101 to 115 (IVFS…IWHW), 140 to 156 (GIHL…FGAF), 203 to 218 (IAAG…FHLS), 237 to 252 (VLSS…AFVV), and 457 to 472 (TFAL…HGAR).

It belongs to the PsbB/PsbC family. PsbB subfamily. As to quaternary structure, PSII is composed of 1 copy each of membrane proteins PsbA, PsbB, PsbC, PsbD, PsbE, PsbF, PsbH, PsbI, PsbJ, PsbK, PsbL, PsbM, PsbT, PsbX, PsbY, PsbZ, Psb30/Ycf12, at least 3 peripheral proteins of the oxygen-evolving complex and a large number of cofactors. It forms dimeric complexes. It depends on Binds multiple chlorophylls. PSII binds additional chlorophylls, carotenoids and specific lipids. as a cofactor.

Its subcellular location is the plastid. The protein resides in the chloroplast thylakoid membrane. Functionally, one of the components of the core complex of photosystem II (PSII). It binds chlorophyll and helps catalyze the primary light-induced photochemical processes of PSII. PSII is a light-driven water:plastoquinone oxidoreductase, using light energy to abstract electrons from H(2)O, generating O(2) and a proton gradient subsequently used for ATP formation. In Brachypodium distachyon (Purple false brome), this protein is Photosystem II CP47 reaction center protein.